The sequence spans 127 residues: Large ribosomal subunit protein uL22 (127 aa).

Belongs to the universal ribosomal protein uL22 family. Part of the 50S ribosomal subunit.

In terms of biological role, this protein binds specifically to 23S rRNA; its binding is stimulated by other ribosomal proteins, e.g. L4, L17, and L20. It is important during the early stages of 50S assembly. It makes multiple contacts with different domains of the 23S rRNA in the assembled 50S subunit and ribosome. The globular domain of the protein is located near the polypeptide exit tunnel on the outside of the subunit, while an extended beta-hairpin is found that lines the wall of the exit tunnel in the center of the 70S ribosome. The protein is Large ribosomal subunit protein uL22 of Brucella suis (strain ATCC 23445 / NCTC 10510).